A 326-amino-acid polypeptide reads, in one-letter code: 4-hydroxythreonine-4-phosphate dehydrogenase (326 aa).

Thr132 lines the substrate pocket. The a divalent metal cation site is built by His160, His205, and His260. Residues Lys268, Asn277, and Arg286 each coordinate substrate.

Belongs to the PdxA family. As to quaternary structure, homodimer. It depends on Zn(2+) as a cofactor. The cofactor is Mg(2+). Requires Co(2+) as cofactor.

It localises to the cytoplasm. It catalyses the reaction 4-(phosphooxy)-L-threonine + NAD(+) = 3-amino-2-oxopropyl phosphate + CO2 + NADH. It functions in the pathway cofactor biosynthesis; pyridoxine 5'-phosphate biosynthesis; pyridoxine 5'-phosphate from D-erythrose 4-phosphate: step 4/5. Its function is as follows. Catalyzes the NAD(P)-dependent oxidation of 4-(phosphooxy)-L-threonine (HTP) into 2-amino-3-oxo-4-(phosphooxy)butyric acid which spontaneously decarboxylates to form 3-amino-2-oxopropyl phosphate (AHAP). In Stenotrophomonas maltophilia (strain K279a), this protein is 4-hydroxythreonine-4-phosphate dehydrogenase.